Here is a 21-residue protein sequence, read N- to C-terminus: Ocellatin-3 (21 aa).

Residue I21 is modified to Isoleucine amide.

As to expression, expressed by the skin dorsal glands.

Its subcellular location is the secreted. Has hemolytic activity against human erythrocytes and antibacterial activity against the Gram-negative bacterium E.coli. The sequence is that of Ocellatin-3 from Leptodactylus ocellatus (Argus frog).